We begin with the raw amino-acid sequence, 599 residues long: Elongation factor 4 (599 aa).

Residues 5–187 (NRIRNFSIVA…AIVTRLPAPK (183 aa)) enclose the tr-type G domain. Residues 17–22 (DHGKST) and 134–137 (NKVD) each bind GTP.

It belongs to the TRAFAC class translation factor GTPase superfamily. Classic translation factor GTPase family. LepA subfamily.

The protein resides in the cell inner membrane. The enzyme catalyses GTP + H2O = GDP + phosphate + H(+). Its function is as follows. Required for accurate and efficient protein synthesis under certain stress conditions. May act as a fidelity factor of the translation reaction, by catalyzing a one-codon backward translocation of tRNAs on improperly translocated ribosomes. Back-translocation proceeds from a post-translocation (POST) complex to a pre-translocation (PRE) complex, thus giving elongation factor G a second chance to translocate the tRNAs correctly. Binds to ribosomes in a GTP-dependent manner. The sequence is that of Elongation factor 4 from Jannaschia sp. (strain CCS1).